The following is a 209-amino-acid chain: Thymidylate kinase (209 aa).

10-17 provides a ligand contact to ATP; the sequence is GIDGCGKT.

Belongs to the thymidylate kinase family.

It catalyses the reaction dTMP + ATP = dTDP + ADP. Phosphorylation of dTMP to form dTDP in both de novo and salvage pathways of dTTP synthesis. The protein is Thymidylate kinase of Synechococcus sp. (strain CC9605).